The primary structure comprises 87 residues: uncharacterized protein (87 aa).

To bacteriophage lambda exonuclease exo.

This is an uncharacterized protein from Escherichia coli (strain K12).